The following is a 142-amino-acid chain: Large ribosomal subunit protein uL13 (142 aa).

The protein belongs to the universal ribosomal protein uL13 family. In terms of assembly, part of the 50S ribosomal subunit.

Its function is as follows. This protein is one of the early assembly proteins of the 50S ribosomal subunit, although it is not seen to bind rRNA by itself. It is important during the early stages of 50S assembly. In Histophilus somni (strain 2336) (Haemophilus somnus), this protein is Large ribosomal subunit protein uL13.